We begin with the raw amino-acid sequence, 117 residues long: Ig heavy chain V region 186-1 (117 aa).

A signal peptide spans 1–19 (MGWSCIMLFLAATATGVHS). A framework-1 region spans residues 20–49 (QVQLQQPGAELVKPGASVKLSCKASGYTFT). C41 and C115 are joined by a disulfide. A complementarity-determining-1 region spans residues 50 to 54 (SYWMH). Residues 55-68 (WVKQRPGRGLEWIG) are framework-2. Residues 69–85 (RIDPNSGGTKYNEKFKS) are complementarity-determining-2. The tract at residues 86–117 (KATLTVDTSSSTAYMQLHSLTSEDSAVYYCAR) is framework-3.

In Mus musculus (Mouse), this protein is Ig heavy chain V region 186-1.